The following is a 310-amino-acid chain: Ribosomal RNA small subunit methyltransferase H (310 aa).

Residues 32–34, Asp-52, Phe-79, Asp-100, and Gln-107 each bind S-adenosyl-L-methionine; that span reads GGH.

Belongs to the methyltransferase superfamily. RsmH family.

Its subcellular location is the cytoplasm. The catalysed reaction is cytidine(1402) in 16S rRNA + S-adenosyl-L-methionine = N(4)-methylcytidine(1402) in 16S rRNA + S-adenosyl-L-homocysteine + H(+). Functionally, specifically methylates the N4 position of cytidine in position 1402 (C1402) of 16S rRNA. This Geobacillus kaustophilus (strain HTA426) protein is Ribosomal RNA small subunit methyltransferase H.